Consider the following 481-residue polypeptide: Cobyric acid synthase (481 aa).

The 187-residue stretch at 247–433 folds into the GATase cobBQ-type domain; it reads AFNVVVPLLP…LHGLFDVPDS (187 aa). Cys-328 acts as the Nucleophile in catalysis. His-425 is a catalytic residue.

The protein belongs to the CobB/CobQ family. CobQ subfamily.

Its pathway is cofactor biosynthesis; adenosylcobalamin biosynthesis. Its function is as follows. Catalyzes amidations at positions B, D, E, and G on adenosylcobyrinic A,C-diamide. NH(2) groups are provided by glutamine, and one molecule of ATP is hydrogenolyzed for each amidation. The chain is Cobyric acid synthase from Alcanivorax borkumensis (strain ATCC 700651 / DSM 11573 / NCIMB 13689 / SK2).